The following is a 359-amino-acid chain: UDP-3-O-acylglucosamine N-acyltransferase (359 aa).

The active-site Proton acceptor is histidine 247.

It belongs to the transferase hexapeptide repeat family. LpxD subfamily. As to quaternary structure, homotrimer.

It catalyses the reaction a UDP-3-O-[(3R)-3-hydroxyacyl]-alpha-D-glucosamine + a (3R)-hydroxyacyl-[ACP] = a UDP-2-N,3-O-bis[(3R)-3-hydroxyacyl]-alpha-D-glucosamine + holo-[ACP] + H(+). It participates in bacterial outer membrane biogenesis; LPS lipid A biosynthesis. In terms of biological role, catalyzes the N-acylation of UDP-3-O-acylglucosamine using 3-hydroxyacyl-ACP as the acyl donor. Is involved in the biosynthesis of lipid A, a phosphorylated glycolipid that anchors the lipopolysaccharide to the outer membrane of the cell. The chain is UDP-3-O-acylglucosamine N-acyltransferase from Chlorobium chlorochromatii (strain CaD3).